We begin with the raw amino-acid sequence, 197 residues long: Recombination protein RecR (197 aa).

A C4-type zinc finger spans residues 57–72; that stretch reads CSVCFGITEEDPCRLC. A Toprim domain is found at 79–174; it reads TSLCVVEEPQ…RVTRLAHGIP (96 aa).

This sequence belongs to the RecR family.

May play a role in DNA repair. It seems to be involved in an RecBC-independent recombinational process of DNA repair. It may act with RecF and RecO. The protein is Recombination protein RecR of Geobacter metallireducens (strain ATCC 53774 / DSM 7210 / GS-15).